The primary structure comprises 229 residues: Large ribosomal subunit protein uL1 (229 aa).

The protein belongs to the universal ribosomal protein uL1 family. In terms of assembly, part of the 50S ribosomal subunit.

Its function is as follows. Binds directly to 23S rRNA. The L1 stalk is quite mobile in the ribosome, and is involved in E site tRNA release. Protein L1 is also a translational repressor protein, it controls the translation of the L11 operon by binding to its mRNA. The polypeptide is Large ribosomal subunit protein uL1 (Thermus thermophilus (strain ATCC BAA-163 / DSM 7039 / HB27)).